Here is a 163-residue protein sequence, read N- to C-terminus: Sperm acrosome membrane-associated protein 3 (163 aa).

The N-terminal stretch at 1–35 (MEAGSWAPRRWPRPPGIVLLALASVLSSLLSSGQA) is a signal peptide. A C-type lysozyme domain is found at 36–163 (RVYSRCELAR…LSDWVDGCEL (128 aa)). Cystine bridges form between C41-C161, C65-C149, C99-C114, and C110-C128.

It belongs to the glycosyl hydrolase 22 family. As to quaternary structure, interacts with ASTL.

The protein localises to the secreted. Functionally, sperm surface membrane protein that may be involved in sperm-egg plasma membrane adhesion and fusion during fertilization. It could be a potential receptor for the egg oligosaccharide residue N-acetylglucosamine, which is present in the extracellular matrix over the egg plasma membrane. The processed form has no detectable bacteriolytic activity in vitro. The chain is Sperm acrosome membrane-associated protein 3 (SPACA3) from Bos taurus (Bovine).